Consider the following 168-residue polypeptide: NADH-ubiquinone oxidoreductase chain 6 (168 aa).

The next 5 membrane-spanning stretches (helical) occupy residues 1 to 21, 27 to 47, 50 to 70, 87 to 107, and 143 to 163; these read MKMMTIYIISLLLMIGFVAFA, IYGGLSLVVSGGLGCGMVVSL, VFLGLVVFLVYLGGMLVVFGY, VVAFIMLLFVLLLQVGWYFMS, and WALALLGWILFMTIYVVLEVV.

It belongs to the complex I subunit 6 family. Core subunit of respiratory chain NADH dehydrogenase (Complex I) which is composed of 45 different subunits.

The protein localises to the mitochondrion inner membrane. The catalysed reaction is a ubiquinone + NADH + 5 H(+)(in) = a ubiquinol + NAD(+) + 4 H(+)(out). Core subunit of the mitochondrial membrane respiratory chain NADH dehydrogenase (Complex I) which catalyzes electron transfer from NADH through the respiratory chain, using ubiquinone as an electron acceptor. Essential for the catalytic activity and assembly of complex I. The protein is NADH-ubiquinone oxidoreductase chain 6 (MT-ND6) of Didelphis virginiana (North American opossum).